The following is a 149-amino-acid chain: Large ribosomal subunit protein uL13 (149 aa).

This sequence belongs to the universal ribosomal protein uL13 family. As to quaternary structure, part of the 50S ribosomal subunit.

This protein is one of the early assembly proteins of the 50S ribosomal subunit, although it is not seen to bind rRNA by itself. It is important during the early stages of 50S assembly. This chain is Large ribosomal subunit protein uL13, found in Pelodictyon phaeoclathratiforme (strain DSM 5477 / BU-1).